A 254-amino-acid chain; its full sequence is Small ribosomal subunit protein uS2 (254 aa).

Over residues 228-248 (RKERKGQDAEEELKKASEPKA) the composition is skewed to basic and acidic residues. Residues 228-254 (RKERKGQDAEEELKKASEPKAAEAAAE) form a disordered region.

The protein belongs to the universal ribosomal protein uS2 family.

This Nitratidesulfovibrio vulgaris (strain ATCC 29579 / DSM 644 / CCUG 34227 / NCIMB 8303 / VKM B-1760 / Hildenborough) (Desulfovibrio vulgaris) protein is Small ribosomal subunit protein uS2.